The chain runs to 353 residues: MTIALGKFTKDEKDLFDIMDDWLRRDRFVFVGWSGLLLFPCAYFAVGGWFTGTTFVTSWYTHGLASSYLEGCNFLTAAVSTPANSLAHSLLLLWGPEAQGDFTRWCQLGGLWTFVALHGAFGLIGFMLRQFELARSVQLRPYNAIAFSGPIAVFVSVFLIYPLGQSGWFFAPSFGVAAIFRFILFFQGFHNWTLNPFHMMGVAGVLGAALLCAIHGATVENTLFEDGDGANTFRAFNPTQAEETYSMVTANRFWSQIFGVAFSNKRWLHFFILFVPVTGLWMSALGVVGLALNLRAYDFVSQEIRAAEDPEFETFYTKNILLNEGIRAWMAAQDQPHENLIFPEEVLPRGNAL.

The residue at position 2 (Thr2) is an N-acetylthreonine. A Phosphothreonine modification is found at Thr2. A helical membrane pass occupies residues 41–61 (CAYFAVGGWFTGTTFVTSWYT). His118 contributes to the chlorophyll a binding site. The helical transmembrane segment at 125-141 (GFMLRQFELARSVQLRP) threads the bilayer. Gln130 and Asn143 together coordinate pheophytin a. Residues 153–166 (VFVSVFLIYPLGQS) traverse the membrane as a helical segment. His198 is a chlorophyll a binding site. Residues 208 to 228 (AALLCAIHGATVENTLFEDGD) form a helical membrane-spanning segment. Residues His215 and Phe262 each coordinate a plastoquinone. His215 lines the Fe cation pocket. His269 lines the Fe cation pocket. Residues 279-295 (GLWMSALGVVGLALNLR) traverse the membrane as a helical segment.

The protein belongs to the reaction center PufL/M/PsbA/D family. PSII is composed of 1 copy each of membrane proteins PsbA, PsbB, PsbC, PsbD, PsbE, PsbF, PsbH, PsbI, PsbJ, PsbK, PsbL, PsbM, PsbT, PsbX, PsbY, PsbZ, Psb30/Ycf12, at least 3 peripheral proteins of the oxygen-evolving complex and a large number of cofactors. It forms dimeric complexes. The D1/D2 heterodimer binds P680, chlorophylls that are the primary electron donor of PSII, and subsequent electron acceptors. It shares a non-heme iron and each subunit binds pheophytin, quinone, additional chlorophylls, carotenoids and lipids. There is also a Cl(-1) ion associated with D1 and D2, which is required for oxygen evolution. The PSII complex binds additional chlorophylls, carotenoids and specific lipids. is required as a cofactor.

The protein localises to the plastid. The protein resides in the chloroplast thylakoid membrane. It carries out the reaction 2 a plastoquinone + 4 hnu + 2 H2O = 2 a plastoquinol + O2. Its function is as follows. Photosystem II (PSII) is a light-driven water:plastoquinone oxidoreductase that uses light energy to abstract electrons from H(2)O, generating O(2) and a proton gradient subsequently used for ATP formation. It consists of a core antenna complex that captures photons, and an electron transfer chain that converts photonic excitation into a charge separation. The D1/D2 (PsbA/PsbD) reaction center heterodimer binds P680, the primary electron donor of PSII as well as several subsequent electron acceptors. D2 is needed for assembly of a stable PSII complex. The chain is Photosystem II D2 protein from Guizotia abyssinica (Niger).